A 393-amino-acid polypeptide reads, in one-letter code: Formate-dependent phosphoribosylglycinamide formyltransferase (393 aa).

N(1)-(5-phospho-beta-D-ribosyl)glycinamide-binding positions include 22–23 (EL) and Glu-82. Residues Arg-114, Lys-155, 160-165 (SSGKGQ), 195-198 (EGFV), and Glu-203 each bind ATP. The ATP-grasp domain maps to 119 to 308 (RLAAEELGLP…EFALHVRAFT (190 aa)). 2 residues coordinate Mg(2+): Glu-267 and Glu-279. N(1)-(5-phospho-beta-D-ribosyl)glycinamide contacts are provided by residues Asp-286, Lys-356, and 363–364 (RR).

It belongs to the PurK/PurT family. In terms of assembly, homodimer.

The catalysed reaction is N(1)-(5-phospho-beta-D-ribosyl)glycinamide + formate + ATP = N(2)-formyl-N(1)-(5-phospho-beta-D-ribosyl)glycinamide + ADP + phosphate + H(+). It participates in purine metabolism; IMP biosynthesis via de novo pathway; N(2)-formyl-N(1)-(5-phospho-D-ribosyl)glycinamide from N(1)-(5-phospho-D-ribosyl)glycinamide (formate route): step 1/1. Its function is as follows. Involved in the de novo purine biosynthesis. Catalyzes the transfer of formate to 5-phospho-ribosyl-glycinamide (GAR), producing 5-phospho-ribosyl-N-formylglycinamide (FGAR). Formate is provided by PurU via hydrolysis of 10-formyl-tetrahydrofolate. This chain is Formate-dependent phosphoribosylglycinamide formyltransferase, found in Vibrio cholerae serotype O1 (strain M66-2).